The primary structure comprises 634 residues: 1-deoxy-D-xylulose-5-phosphate synthase (634 aa).

Thiamine diphosphate-binding positions include H77 and 118-120 (GHA). D149 lines the Mg(2+) pocket. Thiamine diphosphate is bound by residues 150 to 151 (AS), N178, Y289, and E371. N178 contacts Mg(2+).

It belongs to the transketolase family. DXPS subfamily. As to quaternary structure, homodimer. It depends on Mg(2+) as a cofactor. Thiamine diphosphate is required as a cofactor.

The catalysed reaction is D-glyceraldehyde 3-phosphate + pyruvate + H(+) = 1-deoxy-D-xylulose 5-phosphate + CO2. It functions in the pathway metabolic intermediate biosynthesis; 1-deoxy-D-xylulose 5-phosphate biosynthesis; 1-deoxy-D-xylulose 5-phosphate from D-glyceraldehyde 3-phosphate and pyruvate: step 1/1. In terms of biological role, catalyzes the acyloin condensation reaction between C atoms 2 and 3 of pyruvate and glyceraldehyde 3-phosphate to yield 1-deoxy-D-xylulose-5-phosphate (DXP). This is 1-deoxy-D-xylulose-5-phosphate synthase from Leptospira interrogans serogroup Icterohaemorrhagiae serovar copenhageni (strain Fiocruz L1-130).